The sequence spans 187 residues: Pyridoxal 5'-phosphate synthase subunit PdxT (187 aa).

L-glutamine is bound at residue 47-49; that stretch reads GES. The Nucleophile role is filled by Cys76. Residues Arg102 and 128 to 129 contribute to the L-glutamine site; that span reads IR. Residues His165 and Glu167 each act as charge relay system in the active site.

It belongs to the glutaminase PdxT/SNO family. In the presence of PdxS, forms a dodecamer of heterodimers. Only shows activity in the heterodimer.

It catalyses the reaction aldehydo-D-ribose 5-phosphate + D-glyceraldehyde 3-phosphate + L-glutamine = pyridoxal 5'-phosphate + L-glutamate + phosphate + 3 H2O + H(+). It carries out the reaction L-glutamine + H2O = L-glutamate + NH4(+). The protein operates within cofactor biosynthesis; pyridoxal 5'-phosphate biosynthesis. Catalyzes the hydrolysis of glutamine to glutamate and ammonia as part of the biosynthesis of pyridoxal 5'-phosphate. The resulting ammonia molecule is channeled to the active site of PdxS. The polypeptide is Pyridoxal 5'-phosphate synthase subunit PdxT (Methanococcus maripaludis (strain C5 / ATCC BAA-1333)).